Reading from the N-terminus, the 370-residue chain is Pituitary-specific positive transcription factor 1 (370 aa).

The 9aaTAD signature appears at 5–13 (AFASSDNFV). The 75-residue stretch at 202 to 276 (MDSPEIRELE…ILSKWLEEAE (75 aa)) folds into the POU-specific domain. A DNA-binding region (homeobox) is located at residues 292 to 351 (KRKRRTTISIAAKEALERHFGEQSKPSSQEIMRMAEGLNLEKEVVRVWFCNRRQREKRVK).

This sequence belongs to the POU transcription factor family. Class-1 subfamily. In terms of tissue distribution, pituitary gland.

It is found in the nucleus. Functionally, transcription factor that activates growth hormone and prolactin genes. Specifically binds to the consensus sequence 5'-TAAAT-3'. The polypeptide is Pituitary-specific positive transcription factor 1 (POU1F1) (Meleagris gallopavo (Wild turkey)).